We begin with the raw amino-acid sequence, 136 residues long: Large ribosomal subunit protein uL16 (136 aa).

The protein belongs to the universal ribosomal protein uL16 family. Part of the 50S ribosomal subunit.

In terms of biological role, binds 23S rRNA and is also seen to make contacts with the A and possibly P site tRNAs. In Haemophilus influenzae (strain 86-028NP), this protein is Large ribosomal subunit protein uL16.